The sequence spans 1102 residues: Voltage-gated delayed rectifier potassium channel KCNH8 (1102 aa).

Over 1–225 (MPVMKGLLAP…HFSTFKAGWD (225 aa)) the chain is Cytoplasmic. Residues 18-90 (IATRFDGTHS…LQIEKSLEEK (73 aa)) enclose the PAS domain. The PAC domain occupies 93-145 (FKGEIMFYKKNGAPFWCLLDIVPIKNEKGDVVLFLASFKDITDTKVKITSEDK). The chain crosses the membrane as a helical span at residues 226-246 (WLILLATFYVAVTVPYNVCFI). Topologically, residues 247–255 (GNEDLSTTR) are extracellular. The helical transmembrane segment at 256-276 (STTVSDIAVEILFIIDIILNF) threads the bilayer. Over 277-298 (RTTYVSKSGQVIFEARSICIHY) the chain is Cytoplasmic. A helical transmembrane segment spans residues 299-319 (VTTWFIIDLIAALPFDLLYAF). An N-linked (GlcNAc...) asparagine glycan is attached at Asn320. At 320–327 (NVTVVSLV) the chain is on the extracellular side. Residues 328 to 348 (HLLKTVRLLRLLRLLQKLDRY) form a helical; Voltage-sensor membrane-spanning segment. Residues 349–353 (SQHST) are Cytoplasmic-facing. A helical membrane pass occupies residues 354-374 (IVLTLLMSMFALLAHWMACIW). The Extracellular portion of the chain corresponds to 375-419 (YVIGKMEREDNSLLKWEVGWLHELGKRLESPYYGNNTLGGPSIRS). N-linked (GlcNAc...) asparagine glycosylation is present at Asn409. The segment at residues 420–440 (AYIAALYFTLSSLTSVGFGNV) is an intramembrane region (pore-forming). Positions 434–439 (SVGFGN) match the Selectivity filter motif. Over 441-448 (SANTDAEK) the chain is Extracellular. The helical transmembrane segment at 449–469 (IFSICTMLIGALMHALVFGNV) threads the bilayer. The Cytoplasmic segment spans residues 470–1102 (TAIIQRMYSR…DVKDSKAINV (633 aa)). The segment at 551–668 (LFECASRGCL…HKFVEDIQHD (118 aa)) is cNMP-binding domain. 4 disordered regions span residues 683-744 (SRLS…KTGS), 762-793 (PFHS…KEKN), 818-845 (EDGN…ISPS), and 960-983 (LVGS…LHHS). Over residues 710 to 723 (VEDEEEEEVEEEET) the composition is skewed to acidic residues. Basic and acidic residues predominate over residues 777–793 (TKQEADPPNHGTRKEKN). Residues 968-982 (TEAHEQSPVDSELHH) are compositionally biased toward basic and acidic residues.

Belongs to the potassium channel family. H (Eag) (TC 1.A.1.20) subfamily. Kv12.1/KCNH8 sub-subfamily. In terms of assembly, the potassium channel is probably composed of a homo- or heterotetrameric complex of pore-forming alpha subunits that can associate with modulating beta subunits. Detected in superior cervical, mesenteric and coeliac ganglia. Expressed in brain (piriform cortex, olfactory tubercle, cerebral cortex, hippocampus pyramidial cells and dentate gyrus and basal ganglia of caudate/putamen and accumbens nucleus). Expressed in pituitary.

It localises to the membrane. It catalyses the reaction K(+)(in) = K(+)(out). Pore-forming (alpha) subunit of a voltage-gated delayed rectifier potassium channel that mediates outward-rectifying potassium currents. Elicits a slowly activating, non-inactivating and slowly deactivation outwards potassium current at depolarizating voltages from -30 mV to +50mV. Shows no obvious change in the activation rate from different holding potentials. Activation is strongly dependent on the pH of the external solution. The polypeptide is Voltage-gated delayed rectifier potassium channel KCNH8 (Rattus norvegicus (Rat)).